The chain runs to 106 residues: Large ribosomal subunit protein bL21 (106 aa).

This sequence belongs to the bacterial ribosomal protein bL21 family. In terms of assembly, part of the 50S ribosomal subunit. Contacts protein L20.

Its function is as follows. This protein binds to 23S rRNA in the presence of protein L20. The protein is Large ribosomal subunit protein bL21 of Coprothermobacter proteolyticus (strain ATCC 35245 / DSM 5265 / OCM 4 / BT).